Consider the following 967-residue polypeptide: Leucine--tRNA ligase (967 aa).

Positions 43–53 (PYLSGHLHVGH) match the 'HIGH' region motif. Residues 650–654 (KMSKS) carry the 'KMSKS' region motif. ATP is bound at residue K653.

This sequence belongs to the class-I aminoacyl-tRNA synthetase family.

The protein localises to the cytoplasm. The catalysed reaction is tRNA(Leu) + L-leucine + ATP = L-leucyl-tRNA(Leu) + AMP + diphosphate. The sequence is that of Leucine--tRNA ligase from Pyrococcus furiosus (strain ATCC 43587 / DSM 3638 / JCM 8422 / Vc1).